A 155-amino-acid chain; its full sequence is Lipoprotein signal peptidase (155 aa).

Helical transmembrane passes span 7–27, 39–59, 63–83, and 96–116; these read WFWI…YITV, IIPG…FSAF, VGWL…FAYF, and GFIL…GYVV. Residues aspartate 117 and aspartate 133 contribute to the active site. A helical membrane pass occupies residues 126 to 146; the sequence is FPVFNLADVFINIGIICLLIS.

Belongs to the peptidase A8 family.

It localises to the cell inner membrane. It catalyses the reaction Release of signal peptides from bacterial membrane prolipoproteins. Hydrolyzes -Xaa-Yaa-Zaa-|-(S,diacylglyceryl)Cys-, in which Xaa is hydrophobic (preferably Leu), and Yaa (Ala or Ser) and Zaa (Gly or Ala) have small, neutral side chains.. The protein operates within protein modification; lipoprotein biosynthesis (signal peptide cleavage). Its function is as follows. This protein specifically catalyzes the removal of signal peptides from prolipoproteins. This chain is Lipoprotein signal peptidase, found in Microcystis aeruginosa (strain NIES-843 / IAM M-2473).